Reading from the N-terminus, the 968-residue chain is Polycystin-2 (968 aa).

Positions 1–11 (MVNSSRVQPQQ) are enriched in polar residues. Disordered stretches follow at residues 1-28 (MVNSSRVQPQQPGDAKRPPAPRAPDPGR) and 58-181 (RIRQ…LPLE). Residues 1 to 219 (MVNSSRVQPQ…STNREKYLKS (219 aa)) lie on the Cytoplasmic side of the membrane. Residues 62 to 83 (AAARDPPAGAAASPSPPLSSCS) are compositionally biased toward low complexity. Residues serine 76 and serine 80 each carry the phosphoserine modification. Acidic residues predominate over residues 95–107 (EAEEEEEEVEGEE). Low complexity predominate over residues 123–139 (RRSAASSAVSSVGARSR). An Omega-N-methylarginine modification is found at arginine 137. A helical transmembrane segment spans residues 220–241 (VLRELVTYLLFLIVLCILTYGM). The Extracellular portion of the chain corresponds to 242–468 (MSSNVYYYTR…PLKLIRYVTT (227 aa)). Asparagine 299 and asparagine 305 each carry an N-linked (GlcNAc...) asparagine glycan. Asparagine 328 carries N-linked (GlcNAc...) (complex) asparagine glycosylation. Cysteine 331 and cysteine 344 are disulfide-bonded. 2 N-linked (GlcNAc...) asparagine glycosylation sites follow: asparagine 362 and asparagine 375. A helical transmembrane segment spans residues 469 to 489 (FDFFLAACEIIFCFFIFYYVV). Over 490–505 (EEILEIRIHKLHYFRS) the chain is Cytoplasmic. A helical transmembrane segment spans residues 506-526 (FWNCLDVVIVVLSVVAIGINI). Over 527-552 (YRTSNVEVLLQFLEDQNTFPNFEHLA) the chain is Extracellular. A helical membrane pass occupies residues 553–573 (YWQIQFNNIAAVTVFFVWIKL). A cholesterol-binding site is contributed by glutamine 557. Topologically, residues 574–597 (FKFINFNRTMSQLSTTMSRCAKDL) are cytoplasmic. The helical transmembrane segment at 598–619 (FGFAIMFFIIFLAYAQLAYLVF) threads the bilayer. Topologically, residues 620-631 (GTQVDDFSTFQE) are extracellular. Residues 632–646 (CIFTQFRIILGDINF) constitute an intramembrane region (pore-forming). Leucine 641 contributes to the Ca(2+) binding site. The short motif at 641–643 (LGD) is the Selectivity filter element. Over 647 to 654 (AEIEEANR) the chain is Extracellular. Residues 655–675 (VLGPIYFTTFVFFMFFILLNM) form a helical membrane-spanning segment. At 676-968 (FLAIINDTYS…GGNGSSNVHV (293 aa)) the chain is on the cytoplasmic side. An EF-hand domain is found at 750 to 785 (HTDAEIEAIFTKYDQDGDQELTEHEHQQMRDDLEKE). The Ca(2+) site is built by aspartate 763, aspartate 765, aspartate 767, glutamate 769, and glutamate 774. A disordered region spans residues 764 to 831 (QDGDQELTEH…HSSRRRGSIS (68 aa)). A compositionally biased stretch (basic and acidic residues) spans 770 to 795 (LTEHEHQQMRDDLEKEREDLDLDHSS). A compositionally biased stretch (low complexity) spans 796–807 (LPRPMSSRSFPR). 4 positions are modified to phosphoserine: serine 801, serine 808, serine 812, and serine 829. The tract at residues 803-822 (RSFPRSLDDSEEDDDEDSGH) is linker. The important for interaction with PACS1 and PACS2 stretch occupies residues 810 to 821 (DDSEEDDDEDSG). Positions 833-872 (GVSYEEFQVLVRRVDRMEHSIGSIVSKIDAVIVKLEIMER) form a coiled coil. The disordered stretch occupies residues 917–968 (ESDDAASQISHGLGTPVGLNGQPRPRSSRPSSSQSTEGMEGAGGNGSSNVHV). A compositionally biased stretch (low complexity) spans 938–951 (QPRPRSSRPSSSQS).

It belongs to the polycystin family. Homotetramer. Component of the heterotetrameric polycystin channel complex with PKD1; the tetramer contains one PKD1 chain and three PKD2 chains. Isoform 1 interacts with PKD1 while isoform 3 does not. Interacts with PKD1L1; probably forms a Ca(2+) channel. Interacts with CD2AP. Interacts with HAX1. Interacts with NEK8. Part of a complex containing AKAP5, ADCY5, ADCY6 and PDE4C. Interacts (via C-terminus) with TRPV4 (via C-terminus). Interacts (via C-terminal acidic region) with PACS1 and PACS2; these interactions retain the protein in the endoplasmic reticulum and prevent trafficking to the cell membrane. Interacts with TMEM33. Form a heterotetramer with TRPC1 with a 2:2 stoichiometry; has distinct channel properties separate from PKD2 or TRPC1 homomers alone. Interacts with TMEM120A; TMEM120A inhibits PKD2 channel activity through the physical association of PKD2 with TMEM120A. Interacts (via N-terminus) with RYR2; regulates RYR2 channel activity. Post-translationally, phosphorylated. Phosphorylation is important for protein function; a mutant that lacks the N-terminal phosphorylation sites cannot complement a zebrafish pkd2-deficient mutant. PKD-mediated phosphorylation at the C-terminus regulates its function in the release of Ca(2+) stores from the endoplasmic reticulum. Phosphorylation at Ser-812 regulates PKD2 trafficking. Phosphorylation at Ser-76 is required for PKD2 trafficking to or retention at the lateral plasma membrane. Phosphorylation at Ser-801, Ser-812 and Ser-829 regulates PKD2 channel activity. In terms of processing, N-glycosylated. The four subunits in a tetramer probably differ in the extent of glycosylation; simultaneous glycosylation of all experimentally validated sites would probably create steric hindrance. Thus, glycosylation at Asn-305 is not compatible with glycosylation at Asn-328; only one of these two residues is glycosylated at a given time. Sumoylated by SUMO1; sumoylation regulates PKD2 membrane recycling and is necessary for intravascular pressure-induced arterial contractility. As to expression, detected in fetal and adult kidney. Detected at the thick ascending limb of the loop of Henle, at distal tubules, including the distal convoluted tubule and cortical collecting tubules, with weak staining of the collecting duct. Detected on placenta syncytiotrophoblasts (at protein level). Strongly expressed in ovary, fetal and adult kidney, testis, and small intestine. Not detected in peripheral leukocytes.

The protein localises to the cell projection. It localises to the cilium membrane. The protein resides in the endoplasmic reticulum membrane. Its subcellular location is the cell membrane. It is found in the basolateral cell membrane. The protein localises to the cytoplasmic vesicle membrane. It localises to the golgi apparatus. The protein resides in the vesicle. Its subcellular location is the secreted. It is found in the extracellular exosome. The catalysed reaction is K(+)(in) = K(+)(out). It carries out the reaction Na(+)(in) = Na(+)(out). The enzyme catalyses Ca(2+)(in) = Ca(2+)(out). With respect to regulation, channel activity is regulated by phosphorylation. Channel activity is regulated by intracellular Ca(2+). At the endoplasmic reticulum membrane (ER), TMEM33 enhances its channel activity. TMEM120A inhibits the channel activity of PKD2, and mediates mechanosensitivity of the PKD2-TMEM120A channel complex. PKD1/PKD2 complex on the plasma membrane is activated by PKD1 N-terminus. Forms a nonselective cation channel. Can function as a homotetrameric ion channel or can form heteromer with PKD1. Displays distinct function depending on its subcellular localization and regulation by its binding partners. In primary cilium functions as a cation channel, with a preference for monovalent cations over divalent cations that allows K(+), Na(+) and Ca(2+) influx, with low selectivity for Ca(2+). Involved in fluid-flow mechanosensation by the primary cilium in renal epithelium. In the endoplasmic reticulum, likely functions as a K(+) channel to facilitate Ca(2+) release. The heterotetrameric PKD1/PKD2 channel has higher Ca(2+) permeability than homomeric PKD2 channel and acts as a primarily Ca(2+)-permeable channel. Interacts with and acts as a regulator of a number of other channels, such as TRPV4, TRPC1, IP3R, RYR2, ultimately further affecting intracellular signaling, to modulate intracellular Ca(2+) signaling. Together with TRPV4, forms mechano- and thermosensitive channels in cilium. In cardiomyocytes, PKD2 modulates Ca(2+) release from stimulated RYR2 receptors through direct association. Also involved in left-right axis specification via its role in sensing nodal flow; forms a complex with PKD1L1 in cilia to facilitate flow detection in left-right patterning. Acts as a regulator of cilium length together with PKD1. Mediates systemic blood pressure and contributes to the myogenic response in cerebral arteries though vasoconstriction. The protein is Polycystin-2 of Homo sapiens (Human).